The following is a 97-amino-acid chain: Putative pterin-4-alpha-carbinolamine dehydratase (97 aa).

This sequence belongs to the pterin-4-alpha-carbinolamine dehydratase family.

The enzyme catalyses (4aS,6R)-4a-hydroxy-L-erythro-5,6,7,8-tetrahydrobiopterin = (6R)-L-erythro-6,7-dihydrobiopterin + H2O. The polypeptide is Putative pterin-4-alpha-carbinolamine dehydratase (Cyanothece sp. (strain PCC 7425 / ATCC 29141)).